Reading from the N-terminus, the 195-residue chain is COMM domain-containing protein 3 (195 aa).

The 70-residue stretch at 124–193 (HITDVSWRLE…DASKSLERAT (70 aa)) folds into the COMM domain.

It belongs to the COMM domain-containing protein 3 family. In terms of assembly, component of the commander complex consisting of the CCC subcomplex and the retriever subcomplex. Component of the CCC (COMMD/CCDC22/CCDC93) subcomplex consisting of COMMD1, COMMD2, COMMD3, COMMD4, COMMD5, COMMD6, COMMD7, COMMD8, COMMD9, COMMD10, CCDC22 and CCDC93; within the complex forms a heterodimer with COMMD2. Interacts with NFKB1/p105. Interacts with CCDC22, CCDC93, SCNN1B, CUL3, CUL4A, CUL4B, CUL5.

It localises to the cytoplasm. The protein resides in the nucleus. Its function is as follows. Scaffold protein in the commander complex that is essential for endosomal recycling of transmembrane cargos; the commander complex is composed of the CCC subcomplex and the retriever subcomplex. May modulate activity of cullin-RING E3 ubiquitin ligase (CRL) complexes. May down-regulate activation of NF-kappa-B. Modulates Na(+) transport in epithelial cells by regulation of apical cell surface expression of amiloride-sensitive sodium channel (ENaC) subunits. In Mus musculus (Mouse), this protein is COMM domain-containing protein 3 (Commd3).